The primary structure comprises 144 residues: Austinoid biosynthesis clusters protein S (144 aa).

It belongs to the trt14 isomerase family. As to quaternary structure, homodimer.

It functions in the pathway secondary metabolite biosynthesis; terpenoid biosynthesis. Functionally, part of the gene cluster B that mediates the biosynthesis of the fungal meroterpenoid acetoxydehydroaustin. The first step of the pathway is the synthesis of 3,5-dimethylorsellinic acid by the polyketide synthase ausA. 3,5-dimethylorsellinic acid is then prenylated by the polyprenyl transferase ausN. Further epoxidation by the FAD-dependent monooxygenase ausM and cyclization by the probable terpene cyclase ausL lead to the formation of protoaustinoid A. Protoaustinoid A is then oxidized to spiro-lactone preaustinoid A3 by the combined action of the FAD-binding monooxygenases ausB and ausC, and the dioxygenase ausE. Acid-catalyzed keto-rearrangement and ring contraction of the tetraketide portion of preaustinoid A3 by ausJ lead to the formation of preaustinoid A4. The aldo-keto reductase ausK, with the help of ausH, is involved in the next step by transforming preaustinoid A4 into isoaustinone which is in turn hydroxylated by the P450 monooxygenase ausI to form austinolide. The cytochrome P450 monooxygenase ausG then modifies austinolide to austinol. Austinol is further acetylated to austin by the O-acetyltransferase ausP, which spontaneously changes to dehydroaustin. The cytochrome P450 monooxygenase then converts dehydroaustin is into 7-dehydrodehydroaustin. The hydroxylation catalyzed by ausR permits the second O-acetyltransferase ausQ to add an additional acetyl group to the molecule, leading to the formation of acetoxydehydroaustin. Due to genetic rearrangements of the clusters and the subsequent loss of some enzymes, the end product of the Penicillium brasilianum austinoid biosynthesis clusters is acetoxydehydroaustin. AusS is necessary for austinoids production and may play a possible function as a regulator. The polypeptide is Austinoid biosynthesis clusters protein S (Penicillium brasilianum).